We begin with the raw amino-acid sequence, 147 residues long: Probable inactive ribonuclease-like protein 12 (147 aa).

The signal sequence occupies residues 1-20 (MIIMVIIFLVLLFWENEVND).

The protein belongs to the pancreatic ribonuclease family.

The protein resides in the secreted. In terms of biological role, does not exhibit any ribonuclease activity. The polypeptide is Probable inactive ribonuclease-like protein 12 (RNASE12) (Homo sapiens (Human)).